Consider the following 294-residue polypeptide: Cell division protein ZipA (294 aa).

Position 1 (M1) is a topological domain, periplasmic. A helical transmembrane segment spans residues 2–22; it reads EIGLREWLILIGIIVIAGILF. The Cytoplasmic portion of the chain corresponds to 23–294; the sequence is DGWRRMRGGK…FERRALTQKR (272 aa). Disordered stretches follow at residues 64-111 and 126-146; these read THKE…GDLN and KDDFVADNNRHGAAATPSTPV. A compositionally biased stretch (basic and acidic residues) spans 82 to 91; that stretch reads ARERERDPKP.

This sequence belongs to the ZipA family. In terms of assembly, interacts with FtsZ via their C-terminal domains.

The protein resides in the cell inner membrane. Essential cell division protein that stabilizes the FtsZ protofilaments by cross-linking them and that serves as a cytoplasmic membrane anchor for the Z ring. Also required for the recruitment to the septal ring of downstream cell division proteins. The sequence is that of Cell division protein ZipA from Pseudomonas entomophila (strain L48).